Reading from the N-terminus, the 410-residue chain is 2-oxoisovalerate dehydrogenase subunit alpha (410 aa).

Belongs to the BCKDHA family. Heterodimer of an alpha and a beta chain. Thiamine diphosphate serves as cofactor.

It carries out the reaction N(6)-[(R)-lipoyl]-L-lysyl-[protein] + 3-methyl-2-oxobutanoate + H(+) = N(6)-[(R)-S(8)-2-methylpropanoyldihydrolipoyl]-L-lysyl-[protein] + CO2. Its function is as follows. The branched-chain alpha-keto dehydrogenase complex catalyzes the overall conversion of alpha-keto acids to acyl-CoA and CO(2). It contains multiple copies of three enzymatic components: branched-chain alpha-keto acid decarboxylase (E1), lipoamide acyltransferase (E2) and lipoamide dehydrogenase (E3). In Pseudomonas aeruginosa (strain ATCC 15692 / DSM 22644 / CIP 104116 / JCM 14847 / LMG 12228 / 1C / PRS 101 / PAO1), this protein is 2-oxoisovalerate dehydrogenase subunit alpha (bkdA1).